We begin with the raw amino-acid sequence, 148 residues long: Thiol-disulfide oxidoreductase YkuV (148 aa).

One can recognise a Thioredoxin domain in the interval 2–145 (KLRQPMPELT…LEKRVNRVLA (144 aa)). A disulfide bridge connects residues C41 and C44.

Monomer.

It localises to the cytoplasm. In terms of biological role, participates in various redox reactions through the reversible oxidation of its active center dithiol to a disulfide and catalyzes dithiol-disulfide exchange reactions. The protein is Thiol-disulfide oxidoreductase YkuV (ykuV) of Bacillus subtilis (strain 168).